A 446-amino-acid chain; its full sequence is Phosphoglucosamine mutase (446 aa).

The Phosphoserine intermediate role is filled by Ser-101. The Mg(2+) site is built by Ser-101, Asp-240, Asp-242, and Asp-244. Phosphoserine is present on Ser-101.

Belongs to the phosphohexose mutase family. It depends on Mg(2+) as a cofactor. In terms of processing, activated by phosphorylation.

It carries out the reaction alpha-D-glucosamine 1-phosphate = D-glucosamine 6-phosphate. In terms of biological role, catalyzes the conversion of glucosamine-6-phosphate to glucosamine-1-phosphate. The sequence is that of Phosphoglucosamine mutase from Coxiella burnetii (strain RSA 331 / Henzerling II).